The sequence spans 562 residues: uncharacterized protein (562 aa).

5 helical membrane-spanning segments follow: residues V4–L26, G33–F55, A59–G78, L90–F112, and I159–A181. RCK C-terminal domains lie at P207 to T287 and L295 to Q375. Transmembrane regions (helical) follow at residues I385–S402, G406–L428, L449–Q471, L476–H498, V505–A524, and V539–V561.

It belongs to the AAE transporter (TC 2.A.81) family.

It is found in the cell membrane. This is an uncharacterized protein from Bradyrhizobium diazoefficiens (strain JCM 10833 / BCRC 13528 / IAM 13628 / NBRC 14792 / USDA 110).